Reading from the N-terminus, the 538-residue chain is ESX-3 secretion system ATPase EccB3 (538 aa).

Residues 1–16 (MTNQQHDHDFDHDRRS) are compositionally biased toward basic and acidic residues. A disordered region spans residues 1–25 (MTNQQHDHDFDHDRRSFASRTPVNN). Residues 75 to 95 (VLMGVLIVITGLIGSFVFSLI) form a helical membrane-spanning segment.

It belongs to the EccB family. As to quaternary structure, part of the ESX-3 / type VII secretion system (T7SS), which is composed of cytosolic and membrane components. The ESX-3 membrane complex is composed of EccB3, EccC3, EccD3 and EccE3.

It is found in the cell inner membrane. In terms of biological role, an ATPase. Part of the ESX-3 specialized secretion system, which is important for iron and zinc uptake or homeostasis. The sequence is that of ESX-3 secretion system ATPase EccB3 from Mycobacterium tuberculosis (strain CDC 1551 / Oshkosh).